A 94-amino-acid chain; its full sequence is Large ribosomal subunit protein bL31 (94 aa).

Residues K64–S94 are disordered. Basic and acidic residues predominate over residues D73–S94.

This sequence belongs to the bacterial ribosomal protein bL31 family. Type A subfamily. Part of the 50S ribosomal subunit.

Functionally, binds the 23S rRNA. The chain is Large ribosomal subunit protein bL31 from Prochlorococcus marinus (strain SARG / CCMP1375 / SS120).